A 421-amino-acid polypeptide reads, in one-letter code: N-succinylarginine dihydrolase (421 aa).

Substrate-binding positions include 19 to 28 (AGLSLGNLAS), Asn105, and 132 to 133 (HR). Residue Glu167 is part of the active site. Arg199 serves as a coordination point for substrate. His235 is a catalytic residue. Substrate contacts are provided by Asp237 and Asn346. The Nucleophile role is filled by Cys352.

This sequence belongs to the succinylarginine dihydrolase family. As to quaternary structure, homodimer.

It catalyses the reaction N(2)-succinyl-L-arginine + 2 H2O + 2 H(+) = N(2)-succinyl-L-ornithine + 2 NH4(+) + CO2. Its pathway is amino-acid degradation; L-arginine degradation via AST pathway; L-glutamate and succinate from L-arginine: step 2/5. Functionally, catalyzes the hydrolysis of N(2)-succinylarginine into N(2)-succinylornithine, ammonia and CO(2). This is N-succinylarginine dihydrolase from Novosphingobium aromaticivorans (strain ATCC 700278 / DSM 12444 / CCUG 56034 / CIP 105152 / NBRC 16084 / F199).